Here is a 95-residue protein sequence, read N- to C-terminus: Acyl carrier protein (95 aa).

The Carrier domain maps to 4-79; that stretch reads KEIFERIEQV…HVMELTLDLV (76 aa). The residue at position 39 (serine 39) is an O-(pantetheine 4'-phosphoryl)serine.

It belongs to the acyl carrier protein (ACP) family. Post-translationally, 4'-phosphopantetheine is transferred from CoA to a specific serine of apo-ACP by AcpS. This modification is essential for activity because fatty acids are bound in thioester linkage to the sulfhydryl of the prosthetic group.

Its subcellular location is the cytoplasm. Its pathway is lipid metabolism; fatty acid biosynthesis. Functionally, carrier of the growing fatty acid chain in fatty acid biosynthesis. The protein is Acyl carrier protein of Saccharopolyspora erythraea (strain ATCC 11635 / DSM 40517 / JCM 4748 / NBRC 13426 / NCIMB 8594 / NRRL 2338).